We begin with the raw amino-acid sequence, 188 residues long: uncharacterized protein (188 aa).

The chain crosses the membrane as a helical span at residues 121–139; it reads IWLYGGASLITTFINLGLV.

It to B.subtilis YwjB.

Its subcellular location is the membrane. This is an uncharacterized protein from Bacillus subtilis (strain 168).